The sequence spans 61 residues: Cobrotoxin-c (61 aa).

Cystine bridges form between Cys3–Cys23, Cys17–Cys40, Cys42–Cys53, and Cys54–Cys59.

This sequence belongs to the three-finger toxin family. Short-chain subfamily. Type I alpha-neurotoxin sub-subfamily. In terms of tissue distribution, expressed by the venom gland.

The protein resides in the secreted. Its function is as follows. Produces peripheral paralysis by blocking neuromuscular transmission at the postsynaptic site. Binds to the nicotinic acetylcholine receptor. The protein is Cobrotoxin-c of Naja kaouthia (Monocled cobra).